The chain runs to 2541 residues: Talin-1 (2541 aa).

Residues 86-403 (RPLKIRMLDG…GYIDIILKKK (318 aa)) form the FERM domain. The segment at 280–435 (FMAHKNCGNM…PKKSTVLQQQ (156 aa)) is interaction with LAYN. Positions 482-655 (RGHMPPLTSA…QTSGELLQQI (174 aa)) are helical bundle R1. Positions 656 to 786 (GESDTDPRFQ…ALNDLLQHIK (131 aa)) are helical bundle R2. The segment at 787-911 (QHATGGQPIG…NAAAQNAIKK (125 aa)) is helical bundle R3. The interval 913–1043 (LVHKLEHAAK…RTAAQKAQEA (131 aa)) is helical bundle R4. Positions 1045–1205 (GPLEIDSALG…NRCVNCLPGQ (161 aa)) are helical bundle R5. The segment at 1206–1356 (RDVDAAIRMV…QLITMCTQQA (151 aa)) is helical bundle R6. Residues 1357-1452 (PGQKECDNAL…AYLVGVSDPN (96 aa)) form a helical bundle R7A region. The interaction with VCL and F-actin stretch occupies residues 1358–1658 (GQKECDNALR…NMRDKAPGQR (301 aa)). Positions 1460–1579 (LVDPTQFARA…NLTAFASNPE (120 aa)) are helical bundle R8. Thr1486 carries O-linked (GlcNAc) threonine glycosylation. A helical bundle R7B region spans residues 1580–1652 (FATVPAQISP…IKKLITNMRD (73 aa)). The tract at residues 1654 to 1821 (APGQRECDEA…TLNEAASAAG (168 aa)) is helical bundle R9. Positions 1822–1972 (VVGGMVDSIT…VLAALQAGNR (151 aa)) are helical bundle R10. A glycan (O-linked (GlcNAc) threonine) is linked at Thr1889. The segment at 1973 to 2139 (GTQACITAAS…TVKAVEDEAT (167 aa)) is helical bundle R11. Residues 2140–2293 (KGTRALEATI…QAAEAMKGTE (154 aa)) form a helical bundle R12 region. Positions 2292-2531 (TEWVDPEDPT…MIRQQQYKFL (240 aa)) constitute an I/LWEQ domain. Residues 2299–2481 (DPTVIAENEL…AAQKAAAFQD (183 aa)) are helical bundle R13.

As to quaternary structure, interacts with PIP5K1C and NRAP. Binds with high affinity to vinculin VCL and with low affinity to integrins. Interacts with APBB1IP; this inhibits VCL binding. Interacts with F-actin. Interacts with LAYN. Interacts with THSD1. In terms of processing, phosphorylated.

The protein resides in the cell projection. The protein localises to the ruffle membrane. It localises to the cytoplasm. It is found in the cytoskeleton. Its subcellular location is the cell surface. The protein resides in the cell junction. The protein localises to the focal adhesion. Functionally, high molecular weight cytoskeletal protein concentrated at regions of cell-substratum contact and, in lymphocytes, at cell-cell contacts. Involved in connections of major cytoskeletal structures to the plasma membrane. The sequence is that of Talin-1 (TLN1) from Gallus gallus (Chicken).